The primary structure comprises 302 residues: Aspartate carbamoyltransferase catalytic subunit (302 aa).

2 residues coordinate carbamoyl phosphate: arginine 53 and threonine 54. Lysine 82 is an L-aspartate binding site. Residues arginine 103, histidine 131, and glutamine 134 each coordinate carbamoyl phosphate. L-aspartate-binding residues include arginine 164 and arginine 223. The carbamoyl phosphate site is built by leucine 260 and proline 261.

It belongs to the aspartate/ornithine carbamoyltransferase superfamily. ATCase family. Heterooligomer of catalytic and regulatory chains.

The catalysed reaction is carbamoyl phosphate + L-aspartate = N-carbamoyl-L-aspartate + phosphate + H(+). It functions in the pathway pyrimidine metabolism; UMP biosynthesis via de novo pathway; (S)-dihydroorotate from bicarbonate: step 2/3. Catalyzes the condensation of carbamoyl phosphate and aspartate to form carbamoyl aspartate and inorganic phosphate, the committed step in the de novo pyrimidine nucleotide biosynthesis pathway. This is Aspartate carbamoyltransferase catalytic subunit from Methanococcus maripaludis (strain DSM 14266 / JCM 13030 / NBRC 101832 / S2 / LL).